Reading from the N-terminus, the 460-residue chain is MPAANAQSRGSYWITTFGCQMNKADSERMAGILESMGYRAANAELEADLVLYNTCTIRDNAEQKVYSYLGRQAQRKRLDPNLTLIVAGCVAQQEGESLLRRVPELDLVMGPQHANRLEVLLNRVDSGQQVVATEDHHILEDITTARRDSSICGWVNVIYGCNERCTYCVVPSVRGKEQSRLPEAIRLEMEGLAAQGYKEITLLGQNIDAYGRDLPGITPEGRRQHTLTDLLHQVHDVSGIKRIRFATSHPRYFTERLIDACADLPKLCEHFHIPFQSGDNDVLRAMARGYTVERYRRIIDRIRERMPDASLSADVIVAFPGETDLQYQRTLDLIEEIGFDQVNTAAYSPRPNTPAATWDNQLPEEVKVIRLQTINALVERCARERNARYAGRTEEVLAEGINPKDPSQLMGRTRTNRLTFFQAAGPDGHQHNPGDLVNVRIDAVRSFSLSGTPLPCVEQR.

One can recognise an MTTase N-terminal domain in the interval 10–126; the sequence is GSYWITTFGC…LEVLLNRVDS (117 aa). Residues cysteine 19, cysteine 55, cysteine 89, cysteine 161, cysteine 165, and cysteine 168 each coordinate [4Fe-4S] cluster. The Radical SAM core domain occupies 147–384; that stretch reads RDSSICGWVN…NALVERCARE (238 aa). Residues 387-455 enclose the TRAM domain; the sequence is ARYAGRTEEV…SFSLSGTPLP (69 aa).

The protein belongs to the methylthiotransferase family. MiaB subfamily. In terms of assembly, monomer. [4Fe-4S] cluster is required as a cofactor.

It localises to the cytoplasm. It carries out the reaction N(6)-dimethylallyladenosine(37) in tRNA + (sulfur carrier)-SH + AH2 + 2 S-adenosyl-L-methionine = 2-methylsulfanyl-N(6)-dimethylallyladenosine(37) in tRNA + (sulfur carrier)-H + 5'-deoxyadenosine + L-methionine + A + S-adenosyl-L-homocysteine + 2 H(+). Catalyzes the methylthiolation of N6-(dimethylallyl)adenosine (i(6)A), leading to the formation of 2-methylthio-N6-(dimethylallyl)adenosine (ms(2)i(6)A) at position 37 in tRNAs that read codons beginning with uridine. The chain is tRNA-2-methylthio-N(6)-dimethylallyladenosine synthase from Parasynechococcus marenigrum (strain WH8102).